The primary structure comprises 134 residues: Transcription antitermination protein NusB (134 aa).

This sequence belongs to the NusB family.

Functionally, involved in transcription antitermination. Required for transcription of ribosomal RNA (rRNA) genes. Binds specifically to the boxA antiterminator sequence of the ribosomal RNA (rrn) operons. This chain is Transcription antitermination protein NusB, found in Shewanella sp. (strain MR-4).